We begin with the raw amino-acid sequence, 189 residues long: Probable nicotinate-nucleotide adenylyltransferase (189 aa).

It belongs to the NadD family.

It carries out the reaction nicotinate beta-D-ribonucleotide + ATP + H(+) = deamido-NAD(+) + diphosphate. The protein operates within cofactor biosynthesis; NAD(+) biosynthesis; deamido-NAD(+) from nicotinate D-ribonucleotide: step 1/1. In terms of biological role, catalyzes the reversible adenylation of nicotinate mononucleotide (NaMN) to nicotinic acid adenine dinucleotide (NaAD). The protein is Probable nicotinate-nucleotide adenylyltransferase of Exiguobacterium sibiricum (strain DSM 17290 / CCUG 55495 / CIP 109462 / JCM 13490 / 255-15).